The following is a 183-amino-acid chain: Disulfide bond formation protein B 2 (183 aa).

Residues 1–9 (MSLACSRSL) lie on the Cytoplasmic side of the membrane. Residues 10–26 (FFMAFTAGILALGASYY) form a helical membrane-spanning segment. Residues 27 to 44 (LEYAVGLVPCSLCLVQRL) are Periplasmic-facing. C36 and C39 form a disulfide bridge. The chain crosses the membrane as a helical span at residues 45–61 (FMSVLTLCCGLAAVHGP). Residues 62 to 68 (QRVGLSL) are Cytoplasmic-facing. A helical transmembrane segment spans residues 69–85 (YWMVTLLSSLGGTTAAW). Residues 86–142 (RQVLFQSDSLQELAHCAPNPEEMFSSLPWLCALMRMFNDTADCAELSWTLFDLSIPE) are Periplasmic-facing. C101 and C128 are oxidised to a cystine. The helical transmembrane segment at 143-161 (WSLLFFVGMSILAVYQLLR) threads the bilayer. At 162–183 (QVWMALQRPLSGQPSHPALVRD) the chain is on the cytoplasmic side.

Belongs to the DsbB family.

The protein localises to the cell inner membrane. In terms of biological role, required for disulfide bond formation in some periplasmic proteins. Acts by oxidizing the DsbA protein. The sequence is that of Disulfide bond formation protein B 2 from Pseudomonas fluorescens (strain Pf0-1).